The sequence spans 508 residues: 3-octaprenyl-4-hydroxybenzoate carboxy-lyase (508 aa).

Asn178 is a binding site for Mn(2+). Prenylated FMN contacts are provided by residues 181-183, 195-197, and 200-201; these read IYR, RWL, and RG. Glu244 contacts Mn(2+). Asp303 functions as the Proton donor in the catalytic mechanism.

This sequence belongs to the UbiD family. As to quaternary structure, homohexamer. Prenylated FMN is required as a cofactor. It depends on Mn(2+) as a cofactor.

It localises to the cell membrane. The catalysed reaction is a 4-hydroxy-3-(all-trans-polyprenyl)benzoate + H(+) = a 2-(all-trans-polyprenyl)phenol + CO2. It participates in cofactor biosynthesis; ubiquinone biosynthesis. Functionally, catalyzes the decarboxylation of 3-octaprenyl-4-hydroxy benzoate to 2-octaprenylphenol, an intermediate step in ubiquinone biosynthesis. This chain is 3-octaprenyl-4-hydroxybenzoate carboxy-lyase, found in Cupriavidus taiwanensis (strain DSM 17343 / BCRC 17206 / CCUG 44338 / CIP 107171 / LMG 19424 / R1) (Ralstonia taiwanensis (strain LMG 19424)).